Consider the following 396-residue polypeptide: Na(+)/H(+) antiporter NhaA (396 aa).

11 consecutive transmembrane segments (helical) span residues 14-34, 59-79, 95-115, 124-144, 154-174, 178-198, 205-225, 254-274, 278-298, 328-348, and 363-383; these read ASGIILIMAAVLAMILANSGL, LLLWINDGFMAIFFLLVGLEV, TFPAIAAVGGMLAPALIYTFF, AGWAIPAATDIAFALGVMALL, VFLLALAIMDDLGVIIIIALF, QLSLEALAVGILATLTLLWMN, IGLYMLVGLVLWVAVLKSGVH, ALHPWSAYLILPLFAFANAGV, GIGLSSLLSPVPMGIMLGLFV, IFAVSILCGIGFTMSMFIASL, and LGILVGSTLAAVVGYLALRMS.

Belongs to the NhaA Na(+)/H(+) (TC 2.A.33) antiporter family.

The protein localises to the cell inner membrane. It carries out the reaction Na(+)(in) + 2 H(+)(out) = Na(+)(out) + 2 H(+)(in). Its function is as follows. Na(+)/H(+) antiporter that extrudes sodium in exchange for external protons. This Aeromonas salmonicida (strain A449) protein is Na(+)/H(+) antiporter NhaA.